The following is a 65-amino-acid chain: Small, acid-soluble spore protein Tlp (65 aa).

The protein belongs to the Tlp family.

It localises to the spore core. The protein is Small, acid-soluble spore protein Tlp of Bacillus anthracis (strain A0248).